Reading from the N-terminus, the 62-residue chain is Bacteriocin lactacin-F subunit LafX (62 aa).

Positions 1 to 14 (MKLNDKELSKIVGG) are excised as a propeptide.

The protein belongs to the bacteriocin class IIB family. As to quaternary structure, this bacteriocin depends upon the complementation of two peptides for activity: LafA and LafX. Associated with a 180 kDa bacteriocin complex.

Its function is as follows. Heat stable bacteriocin active against Enterococcus faecalis and other Lactobacilli. The sequence is that of Bacteriocin lactacin-F subunit LafX (lafX) from Lactobacillus johnsonii (strain CNCM I-12250 / La1 / NCC 533).